Consider the following 428-residue polypeptide: Histidinol dehydrogenase (428 aa).

Tyr127, Gln185, and Asn208 together coordinate NAD(+). Ser232, Gln254, and His257 together coordinate substrate. 2 residues coordinate Zn(2+): Gln254 and His257. Active-site proton acceptor residues include Glu321 and His322. 4 residues coordinate substrate: His322, Asp355, Glu409, and His414. Asp355 serves as a coordination point for Zn(2+). His414 serves as a coordination point for Zn(2+).

Belongs to the histidinol dehydrogenase family. Zn(2+) serves as cofactor.

It carries out the reaction L-histidinol + 2 NAD(+) + H2O = L-histidine + 2 NADH + 3 H(+). It participates in amino-acid biosynthesis; L-histidine biosynthesis; L-histidine from 5-phospho-alpha-D-ribose 1-diphosphate: step 9/9. Catalyzes the sequential NAD-dependent oxidations of L-histidinol to L-histidinaldehyde and then to L-histidine. The sequence is that of Histidinol dehydrogenase from Pasteurella multocida (strain Pm70).